Reading from the N-terminus, the 113-residue chain is RING-box protein 2 (113 aa).

The segment at 1-26 is disordered; sequence MADVEDGEEPCVLSSHSGSAGSKSGG. Residue alanine 2 is modified to N-acetylalanine. Zn(2+) is bound by residues cysteine 50, cysteine 53, cysteine 61, cysteine 64, cysteine 73, cysteine 80, histidine 82, histidine 85, cysteine 87, cysteine 88, cysteine 99, and cysteine 102. Residues 61–103 form an RING-type zinc finger; that stretch reads CLRCQAENKQEDCVVVWGECNHSFHNCCMSLWVKQNNRCPLCQ.

The protein belongs to the RING-box family. In terms of assembly, catalytic component of multiple cullin-5-RING E3 ubiquitin-protein ligase complexes (ECS complexes, also named CRL5 complexes) composed of CUL5, Elongin BC (ELOB and ELOC), RNF7/RBX2 and a variable SOCS box domain-containing protein as substrate-specific recognition component. Also interacts (with lower preference) with CUL1, CUL2, CUL3, CUL4A and CUL4B; additional evidence is however required to confirm this result in vivo. Interacts with UBE2F. Interacts with CSNK2B, the interaction is not affected by phosphorylation by CK2. May also interact with DCUN1D1, DCUN1D2, DCUN1D3, DCUN1D4 and DCUN1D5.

Its subcellular location is the cytoplasm. It is found in the nucleus. The enzyme catalyses S-ubiquitinyl-[E2 ubiquitin-conjugating enzyme]-L-cysteine + [acceptor protein]-L-lysine = [E2 ubiquitin-conjugating enzyme]-L-cysteine + N(6)-ubiquitinyl-[acceptor protein]-L-lysine.. It catalyses the reaction S-[NEDD8-protein]-yl-[E2 NEDD8-conjugating enzyme]-L-cysteine + [cullin]-L-lysine = [E2 NEDD8-conjugating enzyme]-L-cysteine + N(6)-[NEDD8-protein]-yl-[cullin]-L-lysine.. It participates in protein modification; protein ubiquitination. It functions in the pathway protein modification; protein neddylation. Functionally, catalytic component of multiple cullin-5-RING E3 ubiquitin-protein ligase complexes (ECS complexes), which mediate the ubiquitination and subsequent proteasomal degradation of target proteins. It is thereby involved in various biological processes, such as cell cycle progression, signal transduction and transcription. The functional specificity of the E3 ubiquitin-protein ligase ECS complexes depend on the variable SOCS box-containing substrate recognition component. Within ECS complexes, RNF7/RBX2 recruits the E2 ubiquitination enzyme to the complex via its RING-type and brings it into close proximity to the substrate. Catalytic subunit of various SOCS-containing ECS complexes, such as the ECS(SOCS7) complex, that regulate reelin signaling by mediating ubiquitination and degradation of DAB1. The ECS(SOCS2) complex mediates the ubiquitination and subsequent proteasomal degradation of phosphorylated EPOR and GHR. Promotes ubiquitination and degradation of NF1, thereby regulating Ras protein signal transduction. As part of the ECS(ASB9) complex, catalyzes ubiquitination and degradation of CKB. The ECS(SPSB3) complex catalyzes ubiquitination of nuclear CGAS. As part of the ECS(RAB40C) complex, mediates ANKRD28 ubiquitination and degradation, thereby inhibiting protein phosphatase 6 (PP6) complex activity and focal adhesion assembly during cell migration. As part of some ECS complex, catalyzes 'Lys-11'-linked ubiquitination and degradation of BTRC. ECS complexes and ARIH2 collaborate in tandem to mediate ubiquitination of target proteins; ARIH2 mediating addition of the first ubiquitin on CRLs targets. Specifically catalyzes the neddylation of CUL5 via its interaction with UBE2F. Does not catalyze neddylation of other cullins (CUL1, CUL2, CUL3, CUL4A or CUL4B). May play a role in protecting cells from apoptosis induced by redox agents. This is RING-box protein 2 from Mus musculus (Mouse).